Consider the following 741-residue polypeptide: Protein O-mannosyl-transferase TMTC4 (741 aa).

The Cytoplasmic segment spans residues 1–14; the sequence is MAVLDTDLDHILPS. Residues 15–35 form a helical membrane-spanning segment; the sequence is SVLPPFWAKLVVGSVAIVCFA. Topologically, residues 36–111 are extracellular; it reads RSYDGDFVFD…FHPVGFHVVN (76 aa). N-linked (GlcNAc...) asparagine glycosylation is present at asparagine 78. The chain crosses the membrane as a helical span at residues 112 to 132; it reads ILLHSGISVLMVDVFSVLFGG. Topologically, residues 133–141 are cytoplasmic; it reads LQYTSKGRR. The chain crosses the membrane as a helical span at residues 142–162; the sequence is LHLAPRASLLAALLFAVHPVH. The Extracellular portion of the chain corresponds to 163-165; that stretch reads TEC. Residues 166-186 form a helical membrane-spanning segment; it reads VAGVVGRADLLCALFFLLSFL. The Cytoplasmic segment spans residues 187 to 198; it reads GYCKAFRESNKE. Residues 199–219 traverse the membrane as a helical segment; that stretch reads GAHSSTFWVLLSIFLGAVAML. The Extracellular segment spans residues 220–224; sequence CKEQG. The chain crosses the membrane as a helical span at residues 225–245; it reads ITVLGLNAVFDILVIGKFNVL. Topologically, residues 246–268 are cytoplasmic; that stretch reads EIVQKVLHKDKSLENLGMLRNGG. The helical transmembrane segment at 269 to 288 threads the bilayer; sequence LLFRMTLLTSGGAGMLYVRW. The Extracellular segment spans residues 289–354; that stretch reads RIMGTGPPAF…PLIKSISDWR (66 aa). A helical membrane pass occupies residues 355–375; the sequence is VIALAALWFCLIGLICQALCS. The Cytoplasmic portion of the chain corresponds to 376–382; it reads EDGHKRR. Residues 383–403 traverse the membrane as a helical segment; it reads ILTLGLGFLVIPFLPASNLFF. At 404–412 the chain is on the extracellular side; that stretch reads RVGFVVAER. Residues 413-433 form a helical membrane-spanning segment; it reads VLYLPSVGYCVLLTFGFGALS. Residues 434–440 are Cytoplasmic-facing; it reads KHTKKKK. Residues 441–461 traverse the membrane as a helical segment; it reads LIAAVVLGILFINTLRCVLRS. At 462–741 the chain is on the extracellular side; the sequence is GEWRSEEQLF…KLELMQKKAV (280 aa). TPR repeat units lie at residues 482–515, 516–549, 550–583, 584–617, 618–651, 652–685, and 686–719; these read AKVH…NPKY, VHAM…QPDF, AAAW…RRKY, PDCY…KPEH, SLAW…IPND, HSLM…NPNA, and ASYH…DPTA. The N-linked (GlcNAc...) asparagine glycan is linked to asparagine 497. Asparagine 609 carries N-linked (GlcNAc...) asparagine glycosylation.

This sequence belongs to the TMTC family.

It localises to the membrane. The protein localises to the endoplasmic reticulum. It carries out the reaction a di-trans,poly-cis-dolichyl beta-D-mannosyl phosphate + L-seryl-[protein] = 3-O-(alpha-D-mannosyl)-L-seryl-[protein] + a di-trans,poly-cis-dolichyl phosphate + H(+). The enzyme catalyses a di-trans,poly-cis-dolichyl beta-D-mannosyl phosphate + L-threonyl-[protein] = 3-O-(alpha-D-mannosyl)-L-threonyl-[protein] + a di-trans,poly-cis-dolichyl phosphate + H(+). It participates in protein modification; protein glycosylation. In terms of biological role, transfers mannosyl residues to the hydroxyl group of serine or threonine residues. The 4 members of the TMTC family are O-mannosyl-transferases dedicated primarily to the cadherin superfamily, each member seems to have a distinct role in decorating the cadherin domains with O-linked mannose glycans at specific regions. Also acts as O-mannosyl-transferase on other proteins such as PDIA3. The chain is Protein O-mannosyl-transferase TMTC4 from Homo sapiens (Human).